We begin with the raw amino-acid sequence, 282 residues long: MEVITSIKEAKQIVKNWKSHHLSIGYVPTMGFLHDGHLSLVKNAKTQDKVIVSIFVNPMQFGPNEDFSSYPRDLERDIKMCQDNGVDMVFIPDMTQMYLKNFSTYVDMNIITDKLCGAKRPGHFRGVCTVLAKFFNILNPDIVYMGQKDAQQCVVVRHMVDDLNFDLKIQICPIIREEDGLAKSSRNVYLSEEERKASLAISQSIFLAEKLVREGKKNTSKIIQAMQDILEKEKLIKIDYIELVDFNTMDNIENIADNVLGAVAVFVGETRLIDNFLVQGLK.

30-37 is a binding site for ATP; the sequence is MGFLHDGH. Residue H37 is the Proton donor of the active site. Residue Q60 coordinates (R)-pantoate. Residue Q60 participates in beta-alanine binding. An ATP-binding site is contributed by 146-149; that stretch reads GQKD. Q152 is a (R)-pantoate binding site. Residues I175 and 183–186 each bind ATP; that span reads KSSR.

It belongs to the pantothenate synthetase family. In terms of assembly, homodimer.

The protein resides in the cytoplasm. The catalysed reaction is (R)-pantoate + beta-alanine + ATP = (R)-pantothenate + AMP + diphosphate + H(+). Its pathway is cofactor biosynthesis; (R)-pantothenate biosynthesis; (R)-pantothenate from (R)-pantoate and beta-alanine: step 1/1. Functionally, catalyzes the condensation of pantoate with beta-alanine in an ATP-dependent reaction via a pantoyl-adenylate intermediate. This chain is Pantothenate synthetase, found in Campylobacter jejuni subsp. doylei (strain ATCC BAA-1458 / RM4099 / 269.97).